Here is a 339-residue protein sequence, read N- to C-terminus: Sulfate/thiosulfate import ATP-binding protein CysA (339 aa).

An ABC transporter domain is found at Ile-3–Val-237. Gly-35–Thr-42 contributes to the ATP binding site.

It belongs to the ABC transporter superfamily. Sulfate/tungstate importer (TC 3.A.1.6) family. In terms of assembly, the complex is composed of two ATP-binding proteins (CysA), two transmembrane proteins (CysT and CysW) and a solute-binding protein (CysP).

Its subcellular location is the cell inner membrane. It carries out the reaction sulfate(out) + ATP + H2O = sulfate(in) + ADP + phosphate + H(+). The enzyme catalyses thiosulfate(out) + ATP + H2O = thiosulfate(in) + ADP + phosphate + H(+). Functionally, part of the ABC transporter complex CysAWTP involved in sulfate/thiosulfate import. Responsible for energy coupling to the transport system. The chain is Sulfate/thiosulfate import ATP-binding protein CysA from Caulobacter vibrioides (strain ATCC 19089 / CIP 103742 / CB 15) (Caulobacter crescentus).